We begin with the raw amino-acid sequence, 139 residues long: Asp-hemolysin (139 aa).

Positions 1–5 (MASVQ) are excised as a propeptide. Residues 47–79 (TSEDVQQKTAPPGGSVNVNSCGRSDASSGTTGG) are disordered. The span at 62 to 75 (VNVNSCGRSDASSG) shows a compositional bias: polar residues.

The protein belongs to the aegerolysin family.

In Aspergillus fumigatus (strain ATCC MYA-4609 / CBS 101355 / FGSC A1100 / Af293) (Neosartorya fumigata), this protein is Asp-hemolysin.